Consider the following 450-residue polypeptide: V-type proton ATPase subunit H (450 aa).

It belongs to the V-ATPase H subunit family. In terms of assembly, V-ATPase is a heteromultimeric enzyme composed of a peripheral catalytic V1 complex (components A to H) attached to an integral membrane V0 proton pore complex (components: a, c, c', c'', d, e, f and VOA1).

It is found in the vacuole membrane. Subunit of the V1 complex of vacuolar(H+)-ATPase (V-ATPase), a multisubunit enzyme composed of a peripheral complex (V1) that hydrolyzes ATP and a membrane integral complex (V0) that translocates protons. V-ATPase is responsible for acidifying and maintaining the pH of intracellular compartments. This subunit is essential for activity, but not assembly, of the enzyme complex. This subunit is also required for silencing the ATPase activity of V-ATPase when V1 is detached from V0. The polypeptide is V-type proton ATPase subunit H (vma13) (Schizosaccharomyces pombe (strain 972 / ATCC 24843) (Fission yeast)).